The sequence spans 398 residues: Proteasome-activating nucleotidase (398 aa).

Residues 18–59 adopt a coiled-coil conformation; sequence IMYLKKRIRQLELQVRTLEADKERLERELSRLRMEMSRLRQP. ATP contacts are provided by residues 183–188 and histidine 322; that span reads GCGKTL. The docks into pockets in the proteasome alpha-ring to cause gate opening stretch occupies residues 396–398; the sequence is MYG.

This sequence belongs to the AAA ATPase family. In terms of assembly, homohexamer. The hexameric complex has a two-ring architecture resembling a top hat that caps the 20S proteasome core at one or both ends. Upon ATP-binding, the C-terminus of PAN interacts with the alpha-rings of the proteasome core by binding to the intersubunit pockets.

It localises to the cytoplasm. In terms of biological role, ATPase which is responsible for recognizing, binding, unfolding and translocation of substrate proteins into the archaeal 20S proteasome core particle. Is essential for opening the gate of the 20S proteasome via an interaction with its C-terminus, thereby allowing substrate entry and access to the site of proteolysis. Thus, the C-termini of the proteasomal ATPase function like a 'key in a lock' to induce gate opening and therefore regulate proteolysis. Unfolding activity requires energy from ATP hydrolysis, whereas ATP binding alone promotes ATPase-20S proteasome association which triggers gate opening, and supports translocation of unfolded substrates. The sequence is that of Proteasome-activating nucleotidase from Thermococcus onnurineus (strain NA1).